The primary structure comprises 205 residues: ATP-dependent Clp protease proteolytic subunit (205 aa).

Serine 98 serves as the catalytic Nucleophile. Residue histidine 123 is part of the active site.

This sequence belongs to the peptidase S14 family. Fourteen ClpP subunits assemble into 2 heptameric rings which stack back to back to give a disk-like structure with a central cavity, resembling the structure of eukaryotic proteasomes.

It localises to the cytoplasm. It catalyses the reaction Hydrolysis of proteins to small peptides in the presence of ATP and magnesium. alpha-casein is the usual test substrate. In the absence of ATP, only oligopeptides shorter than five residues are hydrolyzed (such as succinyl-Leu-Tyr-|-NHMec, and Leu-Tyr-Leu-|-Tyr-Trp, in which cleavage of the -Tyr-|-Leu- and -Tyr-|-Trp bonds also occurs).. Cleaves peptides in various proteins in a process that requires ATP hydrolysis. Has a chymotrypsin-like activity. Plays a major role in the degradation of misfolded proteins. In Desulforapulum autotrophicum (strain ATCC 43914 / DSM 3382 / VKM B-1955 / HRM2) (Desulfobacterium autotrophicum), this protein is ATP-dependent Clp protease proteolytic subunit.